The primary structure comprises 398 residues: Phosphoglycerate kinase (398 aa).

Residues 21-23 (DFN), Arg-36, 59-62 (HFGR), Arg-117, and Arg-150 contribute to the substrate site. ATP contacts are provided by residues Lys-200, Glu-321, and 351 to 354 (GGDS).

The protein belongs to the phosphoglycerate kinase family. In terms of assembly, monomer.

It localises to the cytoplasm. The catalysed reaction is (2R)-3-phosphoglycerate + ATP = (2R)-3-phospho-glyceroyl phosphate + ADP. It participates in carbohydrate degradation; glycolysis; pyruvate from D-glyceraldehyde 3-phosphate: step 2/5. The sequence is that of Phosphoglycerate kinase from Wolbachia pipientis wMel.